The sequence spans 930 residues: Protein translocase subunit SecA (930 aa).

ATP-binding positions include Gln87, 105–109, and Asp515; that span reads GEGKT. Cys914, Cys916, Cys925, and His926 together coordinate Zn(2+).

This sequence belongs to the SecA family. In terms of assembly, monomer and homodimer. Part of the essential Sec protein translocation apparatus which comprises SecA, SecYEG and auxiliary proteins SecDF-YajC and YidC. It depends on Zn(2+) as a cofactor.

The protein localises to the cell inner membrane. It is found in the cytoplasm. It carries out the reaction ATP + H2O + cellular proteinSide 1 = ADP + phosphate + cellular proteinSide 2.. Part of the Sec protein translocase complex. Interacts with the SecYEG preprotein conducting channel. Has a central role in coupling the hydrolysis of ATP to the transfer of proteins into and across the cell membrane, serving both as a receptor for the preprotein-SecB complex and as an ATP-driven molecular motor driving the stepwise translocation of polypeptide chains across the membrane. This Burkholderia thailandensis (strain ATCC 700388 / DSM 13276 / CCUG 48851 / CIP 106301 / E264) protein is Protein translocase subunit SecA.